Here is a 200-residue protein sequence, read N- to C-terminus: Large ribosomal subunit protein bL25 (200 aa).

The protein belongs to the bacterial ribosomal protein bL25 family. CTC subfamily. In terms of assembly, part of the 50S ribosomal subunit; part of the 5S rRNA/L5/L18/L25 subcomplex. Contacts the 5S rRNA. Binds to the 5S rRNA independently of L5 and L18.

This is one of the proteins that binds to the 5S RNA in the ribosome where it forms part of the central protuberance. The polypeptide is Large ribosomal subunit protein bL25 (Corynebacterium glutamicum (strain ATCC 13032 / DSM 20300 / JCM 1318 / BCRC 11384 / CCUG 27702 / LMG 3730 / NBRC 12168 / NCIMB 10025 / NRRL B-2784 / 534)).